The following is a 1043-amino-acid chain: MGEVSLIGITAILCQKTDGFWKNIDDSLCRLEVLKSNIDSKFRLVAISTDNRCIFNKWVRTNSEITKCSDLFLEIKQVSSQSSNVEYFGVNFAYKPEVDKFYACFSKCIETLQTQRRQSTLNIQALQINNELQQQLQQQQQLPPIDQLPPPPTSTSTSTISNANISISNSISYDSLHQMASGITLEDLPPPPPSASSLILNNNTPLDLTSLPPIDFSNLPPPPTGLMTSRSSLTEANGLEIKNKLSPLLNGGASGLSSSPPPTTESKNQLNSSSGSNNSSSAPHLTDLFLPTNNNNSSGNQSASNSSPTSQYHQSQPNLQQYGTAPLTASSKLLQQQQQQQQQQQQNIIMTTTTTTTTTINIKTGSSSDSFLKTASGRRSIRVRHSTNQAADQQKKTMGRKDGLAVSLQNVEGLQNIAENLEDETLNLLDLVNEQVVTPEISNNAHLNQSLMKIFEHLQVLFILTGQASTHPGGKLITQVVNKLGRGPQASEFFSGKSVDGGYQWYNLDEVKDSVIGIHNLLALKKNLITAIAHLSTCVRVLGLQASLEIDWMSRNKSSETEKIVVQLACLTRELISSMSRLLAATVTYCYVCSSIAFIRNQQHSASADHNQASIQNRIRSPSTIDTINIWDELKTIKTIPTVPKDGSILKVTLNQLVLMLTSETSYDSKFLKTFITTYQSFASPGVLFTKLIERFYVPEWYSTVPTKISTIQQKVIVVLKYWIENQSSDFDQDVIDQIYFFINNLANSNEGYSELSRLLRGLLDKMIQDREVKFELLFQMPPRISFEEDSILSPIELFSEWSAQSIAQQLTLIDFSIFKDLEARELLNQNFNKPKLKYKSPTIMRMISKSTQFSFWVAYVILMEPKKEKRIKIFEKFCEVGKYLLKMNNFNSLMGLNAGLNLTCVHRLKKTKKKLSSSAISILTELERIFSSKKSFKNYRDHLSTVQLPCIPYLGFNLTDITFIEEGNTDNISSTDPAAANIGPLINFKKRELLYQAWADLSRFQETPYTFQPEEPLNTFLLNFPILDDKELYDLSIALEPK.

The stretch at 109–142 (IETLQTQRRQSTLNIQALQINNELQQQLQQQQQL) forms a coiled coil. 4 stretches are compositionally biased toward low complexity: residues 135 to 145 (QLQQQQQLPPI), 245 to 258 (LSPL…GLSS), 266 to 281 (SKNQ…NSSS), and 293 to 307 (NNNN…SNSS). Disordered regions lie at residues 135-160 (QLQQ…TSTI) and 245-316 (LSPL…HQSQ). Residues 404–434 (LAVSLQNVEGLQNIAENLEDETLNLLDLVNE) adopt a coiled-coil conformation. Positions 645 to 768 (KDGSILKVTL…LLRGLLDKMI (124 aa)) constitute an N-terminal Ras-GEF domain. The 241-residue stretch at 803–1043 (SAQSIAQQLT…YDLSIALEPK (241 aa)) folds into the Ras-GEF domain.

Its function is as follows. Promotes the exchange of Ras-bound GDP by GTP. The protein is Ras guanine nucleotide exchange factor S (gefS) of Dictyostelium discoideum (Social amoeba).